Reading from the N-terminus, the 85-residue chain is U4-theraphotoxin-Hhn1c (85 aa).

The signal sequence occupies residues 1 to 22; that stretch reads MKVTLIAIVTCAAVLVLHTTAA. Positions 23–48 are excised as a propeptide; the sequence is EELEAESQLMEVGMPDTELAAVDEER. Disulfide bonds link Cys52/Cys66, Cys56/Cys77, and Cys71/Cys82.

The protein belongs to the neurotoxin 12 (Hwtx-2) family. 02 (Hwtx-2) subfamily. Expressed by the venom gland.

The protein localises to the secreted. Postsynaptic neurotoxin. This chain is U4-theraphotoxin-Hhn1c, found in Cyriopagopus hainanus (Chinese bird spider).